The primary structure comprises 261 residues: Ribonuclease HII (261 aa).

Positions 71 to 259 constitute an RNase H type-2 domain; the sequence is KYIAGVDEVG…VKEAKLHFDS (189 aa). The a divalent metal cation site is built by aspartate 77, glutamate 78, and aspartate 169.

It belongs to the RNase HII family. Requires Mn(2+) as cofactor. It depends on Mg(2+) as a cofactor.

The protein resides in the cytoplasm. The catalysed reaction is Endonucleolytic cleavage to 5'-phosphomonoester.. Functionally, endonuclease that specifically degrades the RNA of RNA-DNA hybrids. The polypeptide is Ribonuclease HII (Listeria monocytogenes serotype 4b (strain F2365)).